The following is a 267-amino-acid chain: tRNA pseudouridine synthase A (267 aa).

D54 acts as the Nucleophile in catalysis. Substrate is bound at residue Y112.

It belongs to the tRNA pseudouridine synthase TruA family. As to quaternary structure, homodimer.

The enzyme catalyses uridine(38/39/40) in tRNA = pseudouridine(38/39/40) in tRNA. Its function is as follows. Formation of pseudouridine at positions 38, 39 and 40 in the anticodon stem and loop of transfer RNAs. The chain is tRNA pseudouridine synthase A from Bordetella avium (strain 197N).